The following is a 329-amino-acid chain: GTP 3',8-cyclase (329 aa).

One can recognise a Radical SAM core domain in the interval 8 to 234; the sequence is AFARKFYYLR…QLRSRADGPA (227 aa). R17 lines the GTP pocket. [4Fe-4S] cluster is bound by residues C24 and C28. An S-adenosyl-L-methionine-binding site is contributed by Y30. C31 lines the [4Fe-4S] cluster pocket. Position 68 (R68) interacts with GTP. G72 contributes to the S-adenosyl-L-methionine binding site. T99 serves as a coordination point for GTP. Position 123 (S123) interacts with S-adenosyl-L-methionine. K160 is a GTP binding site. M194 provides a ligand contact to S-adenosyl-L-methionine. [4Fe-4S] cluster-binding residues include C257 and C260. Position 262 to 264 (262 to 264) interacts with GTP; that stretch reads RLR. Position 274 (C274) interacts with [4Fe-4S] cluster.

The protein belongs to the radical SAM superfamily. MoaA family. As to quaternary structure, monomer and homodimer. Requires [4Fe-4S] cluster as cofactor.

The catalysed reaction is GTP + AH2 + S-adenosyl-L-methionine = (8S)-3',8-cyclo-7,8-dihydroguanosine 5'-triphosphate + 5'-deoxyadenosine + L-methionine + A + H(+). It participates in cofactor biosynthesis; molybdopterin biosynthesis. Its function is as follows. Catalyzes the cyclization of GTP to (8S)-3',8-cyclo-7,8-dihydroguanosine 5'-triphosphate. The sequence is that of GTP 3',8-cyclase from Cronobacter sakazakii (strain ATCC BAA-894) (Enterobacter sakazakii).